Here is a 602-residue protein sequence, read N- to C-terminus: Elongation factor 4 (602 aa).

One can recognise a tr-type G domain in the interval 6–188; sequence DHIRNFSIVA…AIVNKLPAPK (183 aa). GTP contacts are provided by residues 18–23 and 135–138; these read DHGKST and NKID.

The protein belongs to the TRAFAC class translation factor GTPase superfamily. Classic translation factor GTPase family. LepA subfamily.

The protein resides in the cell inner membrane. It catalyses the reaction GTP + H2O = GDP + phosphate + H(+). Required for accurate and efficient protein synthesis under certain stress conditions. May act as a fidelity factor of the translation reaction, by catalyzing a one-codon backward translocation of tRNAs on improperly translocated ribosomes. Back-translocation proceeds from a post-translocation (POST) complex to a pre-translocation (PRE) complex, thus giving elongation factor G a second chance to translocate the tRNAs correctly. Binds to ribosomes in a GTP-dependent manner. The protein is Elongation factor 4 of Brucella abortus (strain 2308).